Reading from the N-terminus, the 33-residue chain is Neurotoxin Nk-3FTx (33 aa).

2 cysteine pairs are disulfide-bonded: Cys-3–Cys-24 and Cys-6–Cys-11.

In terms of tissue distribution, expressed by the venom gland.

Its subcellular location is the secreted. Possible voltage-gated potassium channel (Kv) blocker. Decreases amplitude of compound action potential and conduction velocity in toad sciatic nerve. Has only mild anticoagulant activity even at a concentration of 5ug/ml. Shows no cytotoxicity towards human cell lines. The polypeptide is Neurotoxin Nk-3FTx (Naja kaouthia (Monocled cobra)).